A 157-amino-acid polypeptide reads, in one-letter code: 2-C-methyl-D-erythritol 2,4-cyclodiphosphate synthase (157 aa).

Aspartate 8, histidine 10, and histidine 42 together coordinate a divalent metal cation. A 4-CDP-2-C-methyl-D-erythritol 2-phosphate-binding site is contributed by 8–10 (DVH). 4-CDP-2-C-methyl-D-erythritol 2-phosphate contacts are provided by residues 56–58 (DIG), 132–135 (STSE), phenylalanine 139, and arginine 142.

This sequence belongs to the IspF family. Homotrimer. It depends on a divalent metal cation as a cofactor.

The enzyme catalyses 4-CDP-2-C-methyl-D-erythritol 2-phosphate = 2-C-methyl-D-erythritol 2,4-cyclic diphosphate + CMP. It participates in isoprenoid biosynthesis; isopentenyl diphosphate biosynthesis via DXP pathway; isopentenyl diphosphate from 1-deoxy-D-xylulose 5-phosphate: step 4/6. Involved in the biosynthesis of isopentenyl diphosphate (IPP) and dimethylallyl diphosphate (DMAPP), two major building blocks of isoprenoid compounds. Catalyzes the conversion of 4-diphosphocytidyl-2-C-methyl-D-erythritol 2-phosphate (CDP-ME2P) to 2-C-methyl-D-erythritol 2,4-cyclodiphosphate (ME-CPP) with a corresponding release of cytidine 5-monophosphate (CMP). The protein is 2-C-methyl-D-erythritol 2,4-cyclodiphosphate synthase of Dehalococcoides mccartyi (strain CBDB1).